Consider the following 88-residue polypeptide: Large ribosomal subunit protein bL27 (88 aa).

The disordered stretch occupies residues 1 to 26 (MAHKKGASSSSNGRDSEAKRLGVKRF).

It belongs to the bacterial ribosomal protein bL27 family.

The protein is Large ribosomal subunit protein bL27 of Corynebacterium glutamicum (strain R).